A 169-amino-acid chain; its full sequence is Alpha-S2-casein-like B (169 aa).

An N-terminal signal peptide occupies residues 1–15; sequence MKFIILTCLLAVALA.

This sequence belongs to the alpha-casein family. As to expression, mammary gland specific. Secreted in milk.

The protein resides in the secreted. Its function is as follows. Important role in the capacity of milk to transport calcium phosphate. The chain is Alpha-S2-casein-like B (Csn1s2b) from Rattus norvegicus (Rat).